Reading from the N-terminus, the 215-residue chain is Uracil phosphoribosyltransferase (215 aa).

30–34 contributes to the GTP binding site; the sequence is KGMVR. Residues R80, R105, and 139 to 147 each bind 5-phospho-alpha-D-ribose 1-diphosphate; that span reads DPMIATAST. Uracil is bound by residues I202 and 207 to 209; that span reads GDA. A 5-phospho-alpha-D-ribose 1-diphosphate-binding site is contributed by D208.

This sequence belongs to the UPRTase family. Requires Mg(2+) as cofactor.

The enzyme catalyses UMP + diphosphate = 5-phospho-alpha-D-ribose 1-diphosphate + uracil. The protein operates within pyrimidine metabolism; UMP biosynthesis via salvage pathway; UMP from uracil: step 1/1. Allosterically activated by GTP. In terms of biological role, catalyzes the conversion of uracil and 5-phospho-alpha-D-ribose 1-diphosphate (PRPP) to UMP and diphosphate. This is Uracil phosphoribosyltransferase from Metallosphaera sedula (strain ATCC 51363 / DSM 5348 / JCM 9185 / NBRC 15509 / TH2).